The sequence spans 127 residues: Small ribosomal subunit protein uS13 (127 aa).

Basic residues predominate over residues 95 to 118 (GLPVRGQRTHTNARTRKGPKKGLV). A disordered region spans residues 95–127 (GLPVRGQRTHTNARTRKGPKKGLVRKAAAPAPK).

This sequence belongs to the universal ribosomal protein uS13 family. In terms of assembly, part of the 30S ribosomal subunit. Forms a loose heterodimer with protein S19. Forms two bridges to the 50S subunit in the 70S ribosome.

Its function is as follows. Located at the top of the head of the 30S subunit, it contacts several helices of the 16S rRNA. In the 70S ribosome it contacts the 23S rRNA (bridge B1a) and protein L5 of the 50S subunit (bridge B1b), connecting the 2 subunits; these bridges are implicated in subunit movement. Contacts the tRNAs in the A and P-sites. This Anaeromyxobacter sp. (strain Fw109-5) protein is Small ribosomal subunit protein uS13.